Reading from the N-terminus, the 297-residue chain is MAFQECVIEVAQDQAEAWSDALFDLCALSVSVEDADADTPDEQPLFGEPGLEPTKLAWNRSRVVALFGDDTDPALAVAAASNALGIDPVPAYALREVEDQDWVRLTQSQFEPIRIGERIWVVPSWHDAPEPDAVVLELDPGLAFGTGSHPTTRLCMQWLEQNLKAGETVLDYGCGSGILAIVAKKLGAGDTLGIDIDPNAVEASRYNAERNQVQADFALPESVSEATYDLVVANILSNPLKLMAAMLSARVRAGGRLILSGVLERQAEEVAAAYAPWLPLTVWRSEEGWVCLHGTRP.

Thr152, Gly173, Asp195, and Asn234 together coordinate S-adenosyl-L-methionine.

It belongs to the methyltransferase superfamily. PrmA family.

Its subcellular location is the cytoplasm. The catalysed reaction is L-lysyl-[protein] + 3 S-adenosyl-L-methionine = N(6),N(6),N(6)-trimethyl-L-lysyl-[protein] + 3 S-adenosyl-L-homocysteine + 3 H(+). Its function is as follows. Methylates ribosomal protein L11. The sequence is that of Ribosomal protein L11 methyltransferase from Cupriavidus pinatubonensis (strain JMP 134 / LMG 1197) (Cupriavidus necator (strain JMP 134)).